The following is a 337-amino-acid chain: Ral GTPase-activating protein subunit alpha-1 (337 aa).

Component of the heterodimeric RalGAP1 complex with RALGAPB. Heterodimerization is required for activity. Interacts with the HLH region of TCF3/isoform E12.

It is found in the cytoplasm. It localises to the nucleus. In terms of biological role, catalytic subunit of the heterodimeric RalGAP1 complex which acts as a GTPase activator for the Ras-like small GTPases RALA and RALB. The sequence is that of Ral GTPase-activating protein subunit alpha-1 from Sus scrofa (Pig).